The following is a 250-amino-acid chain: Small ribosomal subunit protein uS3 (250 aa).

The region spanning 39–111 (IRTLIKNHYP…KVQINIFEVK (73 aa)) is the KH type-2 domain.

Belongs to the universal ribosomal protein uS3 family. Part of the 30S ribosomal subunit. Forms a tight complex with proteins S10 and S14.

Its function is as follows. Binds the lower part of the 30S subunit head. Binds mRNA in the 70S ribosome, positioning it for translation. The chain is Small ribosomal subunit protein uS3 from Rubus stunt phytoplasma.